A 130-amino-acid chain; its full sequence is Trypsin inhibitor (130 aa).

A disordered region spans residues 27–49; that stretch reads LHKQARQSGSGPSPQGPQQRPPL. The segment covering 32-49 has biased composition (low complexity); that stretch reads RQSGSGPSPQGPQQRPPL.

This sequence belongs to the 2S seed storage albumins family. In terms of assembly, the protein consists of two chains linked by disulfide bonds.

Its function is as follows. Inhibits trypsin with a Ki of 7 x 10(-6) M. The chain is Trypsin inhibitor from Mutarda arvensis (Charlock mustard).